The primary structure comprises 673 residues: Ion-translocating oxidoreductase complex subunit C (673 aa).

4Fe-4S ferredoxin-type domains lie at 368–397 and 407–436; these read MGAP…QQLY and KATA…VQYF. Cysteine 377, cysteine 380, cysteine 383, cysteine 387, cysteine 416, cysteine 419, cysteine 422, and cysteine 426 together coordinate [4Fe-4S] cluster. Disordered regions lie at residues 534-553 and 563-653; these read QARA…SGGA and IARA…AAVA.

Belongs to the 4Fe4S bacterial-type ferredoxin family. RnfC subfamily. The complex is composed of six subunits: RsxA, RsxB, RsxC, RsxD, RsxE and RsxG. [4Fe-4S] cluster is required as a cofactor.

It localises to the cell inner membrane. Its function is as follows. Part of a membrane-bound complex that couples electron transfer with translocation of ions across the membrane. Required to maintain the reduced state of SoxR. This Salmonella gallinarum (strain 287/91 / NCTC 13346) protein is Ion-translocating oxidoreductase complex subunit C.